The following is a 141-amino-acid chain: Small ribosomal subunit protein bS6 (141 aa).

Positions threonine 97–glutamate 141 are disordered. Basic and acidic residues predominate over residues leucine 103–serine 124. Over residues alanine 125–glutamate 141 the composition is skewed to acidic residues.

It belongs to the bacterial ribosomal protein bS6 family.

In terms of biological role, binds together with bS18 to 16S ribosomal RNA. The polypeptide is Small ribosomal subunit protein bS6 (Pseudomonas fluorescens (strain ATCC BAA-477 / NRRL B-23932 / Pf-5)).